Reading from the N-terminus, the 711-residue chain is Cyclomaltodextrin glucanotransferase (711 aa).

An N-terminal signal peptide occupies residues 1–31; it reads MRRWLSLVLSMSFVFSAIFIVSDTQKVTVEA. An A1 region spans residues 32-165; sequence AGNLNKVNFT…GIKVIIDFAP (134 aa). The Ca(2+) site is built by D55, N57, N60, and N61. A disulfide bridge connects residues C71 and C78. Ca(2+) contacts are provided by G79 and D81. 127 to 128 serves as a coordination point for substrate; sequence YW. N166 contributes to the Ca(2+) binding site. The interval 166-229 is b; the sequence is NHTSPASETN…NLFDLADLNH (64 aa). H167 is a substrate binding site. Residue I217 coordinates Ca(2+). 220–223 provides a ligand contact to substrate; the sequence is NLFD. D226 is a binding site for Ca(2+). Residues 230–433 form an A2 region; sequence QNPVIDRYLK…LRRNNPALAY (204 aa). A substrate-binding site is contributed by R254. The active-site Nucleophile is D256. 259 to 260 contributes to the substrate binding site; the sequence is KH. Position 260 (H260) interacts with Ca(2+). The active-site Proton donor is the E284. The substrate site is built by H354, D398, and R402. A c region spans residues 434–522; sequence GDTEQRWING…EVGVWAYSAT (89 aa). A d region spans residues 523 to 606; sequence ESTPIIGHVG…SAAYDNFEVL (84 aa). The IPT/TIG domain maps to 526 to 604; the sequence is PIIGHVGPMM…QTSAAYDNFE (79 aa). Residues 605-711 enclose the CBM20 domain; that stretch reads VLTNDQVSVR…TGKIIVDWQN (107 aa). Residues 607–711 are e; it reads TNDQVSVRFV…TGKIIVDWQN (105 aa).

Belongs to the glycosyl hydrolase 13 family. As to quaternary structure, monomer. It depends on Ca(2+) as a cofactor.

The protein localises to the secreted. It carries out the reaction Cyclizes part of a (1-&gt;4)-alpha-D-glucan chain by formation of a (1-&gt;4)-alpha-D-glucosidic bond.. The protein is Cyclomaltodextrin glucanotransferase (cgt) of Geobacillus stearothermophilus (Bacillus stearothermophilus).